The following is a 307-amino-acid chain: Ribosomal RNA small subunit methyltransferase H (307 aa).

Residues 34-36 (GGH), Asp54, Phe79, Asp101, and Gln108 contribute to the S-adenosyl-L-methionine site.

The protein belongs to the methyltransferase superfamily. RsmH family.

Its subcellular location is the cytoplasm. The catalysed reaction is cytidine(1402) in 16S rRNA + S-adenosyl-L-methionine = N(4)-methylcytidine(1402) in 16S rRNA + S-adenosyl-L-homocysteine + H(+). In terms of biological role, specifically methylates the N4 position of cytidine in position 1402 (C1402) of 16S rRNA. This Ruthia magnifica subsp. Calyptogena magnifica protein is Ribosomal RNA small subunit methyltransferase H.